The primary structure comprises 356 residues: Poly(rC)-binding protein 1 (356 aa).

The residue at position 1 (Met-1) is an N-acetylmethionine. KH domains follow at residues 13–75 and 97–162; these read TLTI…FAMI and PVTL…VKQI. Lys-115 is covalently cross-linked (Glycyl lysine isopeptide (Lys-Gly) (interchain with G-Cter in SUMO2)). A phosphoserine mark is found at Ser-173, Ser-189, Ser-190, Ser-246, Ser-264, and Ser-273. Residues 279–343 enclose the KH 3 domain; the sequence is QTTHELTIPN…ASISLAQYLI (65 aa).

Phosphorylated; lowers poly(rC)-binding activity.

It is found in the nucleus. Its subcellular location is the cytoplasm. Functionally, single-stranded nucleic acid binding protein that binds preferentially to oligo dC. Together with PCBP2, required for erythropoiesis, possibly by regulating mRNA splicing. The polypeptide is Poly(rC)-binding protein 1 (PCBP1) (Bos taurus (Bovine)).